Consider the following 710-residue polypeptide: PWWP domain-containing DNA repair factor 3A (710 aa).

Residues 106 to 160 (QESSAGTGRADRSLRGKPMEHVSSPCDSNSSSLPRGDVLGSSRPHRRRPCVQQSL) form a disordered region. The span at 114-125 (RADRSLRGKPME) shows a compositional bias: basic and acidic residues. The span at 128–137 (SSPCDSNSSS) shows a compositional bias: low complexity. At Ser161 the chain carries Phosphoserine. Disordered regions lie at residues 177-204 (KKGL…ESGS) and 230-398 (NGSS…EEPP). Residues 288 to 297 (PSACSEPGEC) show a composition bias toward low complexity. Phosphoserine is present on residues Ser374 and Ser375. Over residues 375 to 385 (SEESMGSNSMR) the composition is skewed to polar residues. The PWWP domain occupies 411–472 (VGMLVWHKHK…KHFDCKEKQT (62 aa)).

The protein belongs to the PWWP3A family. Interacts with TP53BP1 (via BRCT domain); the interaction is not dependent on its phosphorylation status. Binds nucleosomes. Interacts with trimethylated 'Lys-36' of histone H3 (H3K36me3) (in vitro).

Its subcellular location is the nucleus. Involved in the DNA damage response pathway by contributing to the maintenance of chromatin architecture. Recruited to the vicinity of DNA breaks by TP53BP1 and plays an accessory role to facilitate damage-induced chromatin changes and promoting chromatin relaxation. Required for efficient DNA repair and cell survival following DNA damage. This Homo sapiens (Human) protein is PWWP domain-containing DNA repair factor 3A.